The sequence spans 105 residues: MYAVIETGGKQYKVSEGDVLEIEKLSQETEEQVTFDKVLLVKDDENVKVGTPVLEEAQVEGTVLEHGKGEKVTVFKYKPKKNYRRKQGHRQPFSKVKIDKIKLNG.

This sequence belongs to the bacterial ribosomal protein bL21 family. As to quaternary structure, part of the 50S ribosomal subunit. Contacts protein L20.

This protein binds to 23S rRNA in the presence of protein L20. This Natranaerobius thermophilus (strain ATCC BAA-1301 / DSM 18059 / JW/NM-WN-LF) protein is Large ribosomal subunit protein bL21.